An 89-amino-acid chain; its full sequence is Transcription elongation factor 1 homolog (89 aa).

Residues Cys-25, Cys-28, Cys-49, and Cys-52 each coordinate Zn(2+).

This sequence belongs to the ELOF1 family.

The protein localises to the nucleus. In terms of biological role, transcription elongation factor implicated in the maintenance of proper chromatin structure in actively transcribed regions. The polypeptide is Transcription elongation factor 1 homolog (Oryza sativa subsp. japonica (Rice)).